Consider the following 230-residue polypeptide: 2,3-bisphosphoglycerate-dependent phosphoglycerate mutase (230 aa).

Residues Arg-8 to Asn-15, Thr-21 to Gly-22, Arg-60, Glu-87 to Tyr-90, Lys-98, Arg-114 to Arg-115, and Gly-183 to Asn-184 contribute to the substrate site. His-9 (tele-phosphohistidine intermediate) is an active-site residue. Glu-87 functions as the Proton donor/acceptor in the catalytic mechanism.

The protein belongs to the phosphoglycerate mutase family. BPG-dependent PGAM subfamily.

The enzyme catalyses (2R)-2-phosphoglycerate = (2R)-3-phosphoglycerate. Its pathway is carbohydrate degradation; glycolysis; pyruvate from D-glyceraldehyde 3-phosphate: step 3/5. In terms of biological role, catalyzes the interconversion of 2-phosphoglycerate and 3-phosphoglycerate. This chain is 2,3-bisphosphoglycerate-dependent phosphoglycerate mutase, found in Streptococcus uberis (strain ATCC BAA-854 / 0140J).